Reading from the N-terminus, the 207-residue chain is Ribonuclease HII (207 aa).

The RNase H type-2 domain occupies 12 to 201 (DLVAGVDEVG…VRAAWEVREG (190 aa)). 3 residues coordinate a divalent metal cation: Asp-18, Glu-19, and Asp-110.

The protein belongs to the RNase HII family. Requires Mn(2+) as cofactor. Mg(2+) serves as cofactor.

Its subcellular location is the cytoplasm. The catalysed reaction is Endonucleolytic cleavage to 5'-phosphomonoester.. Functionally, endonuclease that specifically degrades the RNA of RNA-DNA hybrids. This Pseudomonas putida (strain ATCC 700007 / DSM 6899 / JCM 31910 / BCRC 17059 / LMG 24140 / F1) protein is Ribonuclease HII.